The sequence spans 405 residues: Argininosuccinate synthase (405 aa).

Residues 10–18 (AYSGGLDTS) and Ala37 contribute to the ATP site. Residues Tyr88 and Ser93 each contribute to the L-citrulline site. Gly118 contacts ATP. L-aspartate-binding residues include Thr120, Asn124, and Asp125. Asn124 contributes to the L-citrulline binding site. L-citrulline contacts are provided by Arg128, Ser179, Ser188, Glu264, and Tyr276.

The protein belongs to the argininosuccinate synthase family. Type 1 subfamily. As to quaternary structure, homotetramer.

Its subcellular location is the cytoplasm. It carries out the reaction L-citrulline + L-aspartate + ATP = 2-(N(omega)-L-arginino)succinate + AMP + diphosphate + H(+). The protein operates within amino-acid biosynthesis; L-arginine biosynthesis; L-arginine from L-ornithine and carbamoyl phosphate: step 2/3. The sequence is that of Argininosuccinate synthase from Nitrosococcus oceani (strain ATCC 19707 / BCRC 17464 / JCM 30415 / NCIMB 11848 / C-107).